The following is a 160-amino-acid chain: Putative pre-16S rRNA nuclease (160 aa).

The protein belongs to the YqgF nuclease family.

It is found in the cytoplasm. Its function is as follows. Could be a nuclease involved in processing of the 5'-end of pre-16S rRNA. This Rhodopseudomonas palustris (strain BisB5) protein is Putative pre-16S rRNA nuclease.